A 998-amino-acid chain; its full sequence is Mediator of RNA polymerase II transcription subunit 14 (998 aa).

The protein belongs to the Mediator complex subunit 14 family. Component of the Mediator complex.

The protein resides in the nucleus. Its function is as follows. Component of the Mediator complex, a coactivator involved in the regulated transcription of nearly all RNA polymerase II-dependent genes. Mediator functions as a bridge to convey information from gene-specific regulatory proteins to the basal RNA polymerase II transcription machinery. Mediator is recruited to promoters by direct interactions with regulatory proteins and serves as a scaffold for the assembly of a functional preinitiation complex with RNA polymerase II and the general transcription factors. This is Mediator of RNA polymerase II transcription subunit 14 (RGR1) from Kluyveromyces lactis (strain ATCC 8585 / CBS 2359 / DSM 70799 / NBRC 1267 / NRRL Y-1140 / WM37) (Yeast).